The chain runs to 366 residues: tRNA/tmRNA (uracil-C(5))-methyltransferase (366 aa).

Positions 190, 218, 223, 239, and 299 each coordinate S-adenosyl-L-methionine. Catalysis depends on cysteine 324, which acts as the Nucleophile. Glutamate 358 functions as the Proton acceptor in the catalytic mechanism.

The protein belongs to the class I-like SAM-binding methyltransferase superfamily. RNA M5U methyltransferase family. TrmA subfamily.

It carries out the reaction uridine(54) in tRNA + S-adenosyl-L-methionine = 5-methyluridine(54) in tRNA + S-adenosyl-L-homocysteine + H(+). The catalysed reaction is uridine(341) in tmRNA + S-adenosyl-L-methionine = 5-methyluridine(341) in tmRNA + S-adenosyl-L-homocysteine + H(+). Its function is as follows. Dual-specificity methyltransferase that catalyzes the formation of 5-methyluridine at position 54 (m5U54) in all tRNAs, and that of position 341 (m5U341) in tmRNA (transfer-mRNA). The chain is tRNA/tmRNA (uracil-C(5))-methyltransferase from Shigella dysenteriae serotype 1 (strain Sd197).